Here is a 318-residue protein sequence, read N- to C-terminus: Olfactory receptor 51E1 (318 aa).

Over 1–31 (MMVDPNGNESSATYFILIGLPGLEEAQFWLA) the chain is Extracellular. Asn-8 carries N-linked (GlcNAc...) asparagine glycosylation. The helical transmembrane segment at 32-52 (FPLCSLYLIAVLGNLTIIYIV) threads the bilayer. The Cytoplasmic segment spans residues 53–60 (RTEHSLHE). A helical membrane pass occupies residues 61-81 (PMYIFLCMLSGIDILISTSSM). Residues 82-100 (PKMLAIFWFNSTTIQFDAC) are Extracellular-facing. Asn-91 carries an N-linked (GlcNAc...) asparagine glycan. A disulfide bridge links Cys-100 with Cys-182. The chain crosses the membrane as a helical span at residues 101-123 (LLQMFAIHSLSGMESTVLLAMAF). Residues 124-145 (DRYVAICHPLRHATVLTLPRVT) lie on the Cytoplasmic side of the membrane. A helical membrane pass occupies residues 146–166 (KIGVAAVVRGAALMAPLPVFI). At 167 to 198 (KQLPFCRSNILSHSYCLHQDVMKLACDDIRVN) the chain is on the extracellular side. Residues 199-219 (VVYGLIVIISAIGLDSLLISF) form a helical membrane-spanning segment. Over 220–239 (SYLLILKTVLGLTREAQAKA) the chain is Cytoplasmic. Residues 240-260 (FGTCVSHVCAVFIFYVPFIGL) traverse the membrane as a helical segment. The Extracellular segment spans residues 261–275 (SMVHRFSKRRDSPLP). A helical transmembrane segment spans residues 276-296 (VILANIYLLVPPVLNPIVYGV). Topologically, residues 297 to 318 (KTKEIRQRILRLFHVATHASEP) are cytoplasmic.

The protein belongs to the G-protein coupled receptor 1 family. Highly expressed in prostate. Very low levels may be detected in some other tissues, such as placenta, skeletal muscle, heart, ovary and testis. Up-regulated in prostate cancers.

The protein localises to the cell membrane. Odorant receptor. In Homo sapiens (Human), this protein is Olfactory receptor 51E1 (OR51E1).